Consider the following 366-residue polypeptide: S-adenosylmethionine:tRNA ribosyltransferase-isomerase (366 aa).

It belongs to the QueA family. Monomer.

Its subcellular location is the cytoplasm. The catalysed reaction is 7-aminomethyl-7-carbaguanosine(34) in tRNA + S-adenosyl-L-methionine = epoxyqueuosine(34) in tRNA + adenine + L-methionine + 2 H(+). It functions in the pathway tRNA modification; tRNA-queuosine biosynthesis. Transfers and isomerizes the ribose moiety from AdoMet to the 7-aminomethyl group of 7-deazaguanine (preQ1-tRNA) to give epoxyqueuosine (oQ-tRNA). The protein is S-adenosylmethionine:tRNA ribosyltransferase-isomerase of Synechococcus sp. (strain CC9605).